A 241-amino-acid chain; its full sequence is Probable xyloglucan-specific endo-beta-1,4-glucanase A (241 aa).

Positions 1–15 (MKVLALSALLSLASA) are cleaved as a signal peptide. A glycan (N-linked (GlcNAc...) asparagine) is linked at N47.

This sequence belongs to the glycosyl hydrolase 12 (cellulase H) family.

The protein localises to the secreted. The enzyme catalyses xyloglucan + H2O = xyloglucan oligosaccharides.. In terms of biological role, catalyzes endohydrolysis of 1,4-beta-D-glucosidic linkages in xyloglucan with retention of the beta-configuration of the glycosyl residues. Specific for xyloglucan and does not hydrolyze other cell wall components. The polypeptide is Probable xyloglucan-specific endo-beta-1,4-glucanase A (xgeA) (Aspergillus niger (strain ATCC MYA-4892 / CBS 513.88 / FGSC A1513)).